The chain runs to 465 residues: Cysteine--tRNA ligase (465 aa).

C27 contacts Zn(2+). The 'HIGH' region signature appears at 29-39 (PTVYDDAHLGH). Residues C207, H237, and E241 each contribute to the Zn(2+) site. The 'KMSKS' region motif lies at 269–273 (KMSKS). K272 is an ATP binding site.

This sequence belongs to the class-I aminoacyl-tRNA synthetase family. Monomer. Zn(2+) serves as cofactor.

Its subcellular location is the cytoplasm. The catalysed reaction is tRNA(Cys) + L-cysteine + ATP = L-cysteinyl-tRNA(Cys) + AMP + diphosphate. This is Cysteine--tRNA ligase (cysS) from Helicobacter pylori (strain J99 / ATCC 700824) (Campylobacter pylori J99).